Consider the following 151-residue polypeptide: Small ribosomal subunit protein uS15 (151 aa).

It belongs to the universal ribosomal protein uS15 family. Component of the small ribosomal subunit. Mature ribosomes consist of a small (40S) and a large (60S) subunit. The 40S subunit contains about 32 different proteins and 1 molecule of RNA (18S). The 60S subunit contains 45 different proteins and 3 molecules of RNA (25S, 5.8S and 5S).

It is found in the cytoplasm. Functionally, component of the ribosome, a large ribonucleoprotein complex responsible for the synthesis of proteins in the cell. The small ribosomal subunit (SSU) binds messenger RNAs (mRNAs) and translates the encoded message by selecting cognate aminoacyl-transfer RNA (tRNA) molecules. The large subunit (LSU) contains the ribosomal catalytic site termed the peptidyl transferase center (PTC), which catalyzes the formation of peptide bonds, thereby polymerizing the amino acids delivered by tRNAs into a polypeptide chain. The nascent polypeptides leave the ribosome through a tunnel in the LSU and interact with protein factors that function in enzymatic processing, targeting, and the membrane insertion of nascent chains at the exit of the ribosomal tunnel. The polypeptide is Small ribosomal subunit protein uS15 (RPS13) (Candida albicans (strain SC5314 / ATCC MYA-2876) (Yeast)).